We begin with the raw amino-acid sequence, 120 residues long: Large ribosomal subunit protein bL17 (120 aa).

The protein belongs to the bacterial ribosomal protein bL17 family. Part of the 50S ribosomal subunit. Contacts protein L32.

The protein is Large ribosomal subunit protein bL17 of Bacillus subtilis (strain 168).